The following is an 874-amino-acid chain: Alanine--tRNA ligase (874 aa).

Zn(2+) is bound by residues histidine 562, histidine 566, cysteine 665, and histidine 669.

Belongs to the class-II aminoacyl-tRNA synthetase family. Zn(2+) serves as cofactor.

Its subcellular location is the cytoplasm. The enzyme catalyses tRNA(Ala) + L-alanine + ATP = L-alanyl-tRNA(Ala) + AMP + diphosphate. Functionally, catalyzes the attachment of alanine to tRNA(Ala) in a two-step reaction: alanine is first activated by ATP to form Ala-AMP and then transferred to the acceptor end of tRNA(Ala). Also edits incorrectly charged Ser-tRNA(Ala) and Gly-tRNA(Ala) via its editing domain. This chain is Alanine--tRNA ligase, found in Pseudomonas aeruginosa (strain ATCC 15692 / DSM 22644 / CIP 104116 / JCM 14847 / LMG 12228 / 1C / PRS 101 / PAO1).